Consider the following 927-residue polypeptide: Isoleucine--tRNA ligase (927 aa).

Positions 57 to 67 (PYANGHIHIGH) match the 'HIGH' region motif. Glutamate 561 serves as a coordination point for L-isoleucyl-5'-AMP. The short motif at 602 to 606 (KMSKS) is the 'KMSKS' region element. Lysine 605 contacts ATP. Cysteine 897, cysteine 900, cysteine 917, and cysteine 920 together coordinate Zn(2+).

This sequence belongs to the class-I aminoacyl-tRNA synthetase family. IleS type 1 subfamily. Monomer. Requires Zn(2+) as cofactor.

The protein resides in the cytoplasm. It carries out the reaction tRNA(Ile) + L-isoleucine + ATP = L-isoleucyl-tRNA(Ile) + AMP + diphosphate. Catalyzes the attachment of isoleucine to tRNA(Ile). As IleRS can inadvertently accommodate and process structurally similar amino acids such as valine, to avoid such errors it has two additional distinct tRNA(Ile)-dependent editing activities. One activity is designated as 'pretransfer' editing and involves the hydrolysis of activated Val-AMP. The other activity is designated 'posttransfer' editing and involves deacylation of mischarged Val-tRNA(Ile). This Syntrophotalea carbinolica (strain DSM 2380 / NBRC 103641 / GraBd1) (Pelobacter carbinolicus) protein is Isoleucine--tRNA ligase.